The chain runs to 506 residues: Histidine--tRNA ligase, mitochondrial (506 aa).

Residues methionine 1–cysteine 33 constitute a mitochondrion transit peptide. The residue at position 67 (serine 67) is a Phosphoserine. L-histidine-binding positions include aspartate 131–threonine 133, arginine 158, glutamine 174, aspartate 178, arginine 327, and tyrosine 331–tyrosine 332. Lysine 444 carries the post-translational modification N6-acetyllysine.

Belongs to the class-II aminoacyl-tRNA synthetase family. As to quaternary structure, homodimer. As to expression, a high level expression is seen in the heart, kidney and skeletal muscle while a lower level expression is seen in the brain and liver.

The protein localises to the mitochondrion. It carries out the reaction tRNA(His) + L-histidine + ATP = L-histidyl-tRNA(His) + AMP + diphosphate + H(+). Its function is as follows. Mitochondrial aminoacyl-tRNA synthetase that catalyzes the ATP-dependent ligation of histidine to the 3'-end of its cognate tRNA, via the formation of an aminoacyl-adenylate intermediate (His-AMP). This chain is Histidine--tRNA ligase, mitochondrial (HARS2), found in Homo sapiens (Human).